Consider the following 158-residue polypeptide: SsrA-binding protein (158 aa).

Residues 131–158 (GKKTHDKRETEKKRDWNREKARLLRDRG) are disordered. Over residues 136–158 (DKRETEKKRDWNREKARLLRDRG) the composition is skewed to basic and acidic residues.

This sequence belongs to the SmpB family.

The protein resides in the cytoplasm. Functionally, required for rescue of stalled ribosomes mediated by trans-translation. Binds to transfer-messenger RNA (tmRNA), required for stable association of tmRNA with ribosomes. tmRNA and SmpB together mimic tRNA shape, replacing the anticodon stem-loop with SmpB. tmRNA is encoded by the ssrA gene; the 2 termini fold to resemble tRNA(Ala) and it encodes a 'tag peptide', a short internal open reading frame. During trans-translation Ala-aminoacylated tmRNA acts like a tRNA, entering the A-site of stalled ribosomes, displacing the stalled mRNA. The ribosome then switches to translate the ORF on the tmRNA; the nascent peptide is terminated with the 'tag peptide' encoded by the tmRNA and targeted for degradation. The ribosome is freed to recommence translation, which seems to be the essential function of trans-translation. The protein is SsrA-binding protein of Brucella abortus biovar 1 (strain 9-941).